The primary structure comprises 215 residues: Outer membrane protein assembly factor BamC homolog (215 aa).

Positions 1 to 16 are cleaved as a signal peptide; it reads MKKIILNLVTAIILAG. Residue cysteine 17 is the site of N-palmitoyl cysteine attachment. Cysteine 17 is lipidated: S-diacylglycerol cysteine.

This sequence belongs to the BamC family.

The protein resides in the cell outer membrane. The sequence is that of Outer membrane protein assembly factor BamC homolog from Haemophilus influenzae (strain ATCC 51907 / DSM 11121 / KW20 / Rd).